Here is a 115-residue protein sequence, read N- to C-terminus: U3-lycotoxin-Ls1a (115 aa).

The N-terminal stretch at 1-20 (MKFVLLFGVLLVTLFSYSSA) is a signal peptide. Positions 21–44 (EMLDDFDQADEDELLSSIEKEEAR) are excised as a propeptide. Intrachain disulfides connect cysteine 48–cysteine 63, cysteine 55–cysteine 72, cysteine 62–cysteine 87, and cysteine 74–cysteine 85.

Belongs to the neurotoxin 19 (CSTX) family. 01 subfamily. As to expression, expressed by the venom gland.

The protein resides in the secreted. This is U3-lycotoxin-Ls1a from Lycosa singoriensis (Wolf spider).